The sequence spans 524 residues: Cytochrome P450 monooxygenase lnaC (524 aa).

The helical transmembrane segment at 16 to 36 (ALAVSCIAVSLFLLSPWIAYA) threads the bilayer. Residue Asn-150 is glycosylated (N-linked (GlcNAc...) asparagine). Cys-471 is a heme binding site.

This sequence belongs to the cytochrome P450 family. It depends on heme as a cofactor.

It localises to the membrane. The protein operates within secondary metabolite biosynthesis. In terms of biological role, cytochrome P450 monooxygenase; part of the lna gene cluster that mediates the biosynthesis of diastereomeric piperazines. Lna and lnb clusters encode sets of enzymes that produce overlapping sets of previously undescribed metabolites such as piperazinomycin-like metabolites or morpholine. The lna and lnb biosynthetic pathways appear to be part of a signaling network that controls the formation of sclerotia, a resilient overwintering structure. One primary function of the non-canonical nonribosomal peptide synthetases lnaA and lnbA consists in the reduction of L-tyrosine. The presence in the clusters of tailoring enzymes such as the oxidoreductases lnaB, lnbB, lnaE or lnbE, as well as of the cytochrome P450 monooxygenases lnaC, lnaD, or lnbC, might explain formation of various diastereomeric piperazines. The polypeptide is Cytochrome P450 monooxygenase lnaC (Aspergillus flavus (strain ATCC 200026 / FGSC A1120 / IAM 13836 / NRRL 3357 / JCM 12722 / SRRC 167)).